Consider the following 468-residue polypeptide: Ribulose bisphosphate carboxylase large chain (468 aa).

Lysine 5 is modified (N6,N6,N6-trimethyllysine). 2 residues coordinate substrate: asparagine 114 and threonine 164. The active-site Proton acceptor is the lysine 166. Residue lysine 168 coordinates substrate. 3 residues coordinate Mg(2+): lysine 192, aspartate 194, and glutamate 195. N6-carboxylysine is present on lysine 192. Residue histidine 285 is the Proton acceptor of the active site. Positions 286, 318, and 370 each coordinate substrate.

This sequence belongs to the RuBisCO large chain family. Type I subfamily. In terms of assembly, heterohexadecamer of 8 large chains and 8 small chains; disulfide-linked. The disulfide link is formed within the large subunit homodimers. Mg(2+) is required as a cofactor. The disulfide bond which can form in the large chain dimeric partners within the hexadecamer appears to be associated with oxidative stress and protein turnover.

The protein localises to the plastid. The protein resides in the chloroplast. The enzyme catalyses 2 (2R)-3-phosphoglycerate + 2 H(+) = D-ribulose 1,5-bisphosphate + CO2 + H2O. It catalyses the reaction D-ribulose 1,5-bisphosphate + O2 = 2-phosphoglycolate + (2R)-3-phosphoglycerate + 2 H(+). Its function is as follows. RuBisCO catalyzes two reactions: the carboxylation of D-ribulose 1,5-bisphosphate, the primary event in carbon dioxide fixation, as well as the oxidative fragmentation of the pentose substrate in the photorespiration process. Both reactions occur simultaneously and in competition at the same active site. The chain is Ribulose bisphosphate carboxylase large chain from Nolana spathulata (Chilean bell flower).